The chain runs to 512 residues: Protein SHC1 (512 aa).

Residues 101–113 show a composition bias toward acidic residues; it reads EQDEFENDVEDDA. 2 disordered regions span residues 101–122 and 144–165; these read EQDE…EKSQ and DGNS…SVAL. 4 Sel1-like repeats span residues 318 to 353, 354 to 389, 390 to 429, and 433 to 470; these read PDAQ…KRLH, IESV…TKNH, PAAM…SMAS, and CGAP…ALGH.

It belongs to the SKT5 family.

It localises to the cytoplasm. It is found in the cytoplasmic granule membrane. Required for the activation of chitin synthase III (CHS3) activity during the sporulation process. This chain is Protein SHC1 (SHC1), found in Saccharomyces cerevisiae (strain YJM789) (Baker's yeast).